Here is a 428-residue protein sequence, read N- to C-terminus: 2,3-bisphosphoglycerate-independent phosphoglycerate mutase 2 (428 aa).

It belongs to the BPG-independent phosphoglycerate mutase family. A-PGAM subfamily.

It carries out the reaction (2R)-2-phosphoglycerate = (2R)-3-phosphoglycerate. It participates in carbohydrate degradation; glycolysis; pyruvate from D-glyceraldehyde 3-phosphate: step 3/5. Catalyzes the interconversion of 2-phosphoglycerate and 3-phosphoglycerate. The polypeptide is 2,3-bisphosphoglycerate-independent phosphoglycerate mutase 2 (apgM2) (Methanocaldococcus jannaschii (strain ATCC 43067 / DSM 2661 / JAL-1 / JCM 10045 / NBRC 100440) (Methanococcus jannaschii)).